The sequence spans 103 residues: Small ribosomal subunit protein uS10 (103 aa).

Belongs to the universal ribosomal protein uS10 family. As to quaternary structure, part of the 30S ribosomal subunit.

Its function is as follows. Involved in the binding of tRNA to the ribosomes. The polypeptide is Small ribosomal subunit protein uS10 (Pseudoalteromonas translucida (strain TAC 125)).